A 194-amino-acid chain; its full sequence is Putative L,D-transpeptidase YciB (194 aa).

The first 19 residues, 1–19 (MKLSLFIIAVLMPVILLSA), serve as a signal peptide directing secretion. Cys-20 carries N-palmitoyl cysteine lipidation. Cys-20 carries S-diacylglycerol cysteine lipidation. A L,D-TPase catalytic domain is found at 68-194 (VWIDVNVKEQ…IPEHTKVVIS (127 aa)). His-144 functions as the Proton donor/acceptor in the catalytic mechanism. The active-site Nucleophile is Cys-170.

Belongs to the YkuD family.

It is found in the cell membrane. Its pathway is cell wall biogenesis; peptidoglycan biosynthesis. In Bacillus subtilis (strain 168), this protein is Putative L,D-transpeptidase YciB (yciB).